The sequence spans 93 residues: MSTETLERKSVQRKPMPLYKVLLHNDDHTPMNYVIEVLMKTIPKMQPSKARKIMLEAHNGGVAVVIVCALEHAEFYSESLNRHNLTSTYEPDC.

Belongs to the ClpS family. As to quaternary structure, binds to the N-terminal domain of the chaperone ClpA.

In terms of biological role, involved in the modulation of the specificity of the ClpAP-mediated ATP-dependent protein degradation. This Gloeobacter violaceus (strain ATCC 29082 / PCC 7421) protein is ATP-dependent Clp protease adapter protein ClpS.